The sequence spans 374 residues: Erythronate-4-phosphate dehydrogenase (374 aa).

Residues S45 and T67 each contribute to the substrate site. Residue D147 participates in NAD(+) binding. R208 is a catalytic residue. D232 provides a ligand contact to NAD(+). E237 is an active-site residue. The active-site Proton donor is the H254. G257 provides a ligand contact to NAD(+).

The protein belongs to the D-isomer specific 2-hydroxyacid dehydrogenase family. PdxB subfamily. In terms of assembly, homodimer.

The protein localises to the cytoplasm. It catalyses the reaction 4-phospho-D-erythronate + NAD(+) = (R)-3-hydroxy-2-oxo-4-phosphooxybutanoate + NADH + H(+). It participates in cofactor biosynthesis; pyridoxine 5'-phosphate biosynthesis; pyridoxine 5'-phosphate from D-erythrose 4-phosphate: step 2/5. Catalyzes the oxidation of erythronate-4-phosphate to 3-hydroxy-2-oxo-4-phosphonooxybutanoate. The chain is Erythronate-4-phosphate dehydrogenase from Pseudoalteromonas atlantica (strain T6c / ATCC BAA-1087).